The following is a 211-amino-acid chain: Pyridoxine/pyridoxamine 5'-phosphate oxidase (211 aa).

Substrate is bound by residues Arg8–Tyr11 and Lys66. FMN contacts are provided by residues Arg61–Lys66, Phe76–Thr77, Arg82, Lys83, and Gln105. Residues Tyr123, Arg127, and Ser131 each coordinate substrate. FMN contacts are provided by residues Gln140 to Ser141 and Trp184. Residue Arg190–His192 participates in substrate binding. Arg194 is a binding site for FMN.

It belongs to the pyridoxamine 5'-phosphate oxidase family. As to quaternary structure, homodimer. Requires FMN as cofactor.

It carries out the reaction pyridoxamine 5'-phosphate + O2 + H2O = pyridoxal 5'-phosphate + H2O2 + NH4(+). The enzyme catalyses pyridoxine 5'-phosphate + O2 = pyridoxal 5'-phosphate + H2O2. It functions in the pathway cofactor metabolism; pyridoxal 5'-phosphate salvage; pyridoxal 5'-phosphate from pyridoxamine 5'-phosphate: step 1/1. Its pathway is cofactor metabolism; pyridoxal 5'-phosphate salvage; pyridoxal 5'-phosphate from pyridoxine 5'-phosphate: step 1/1. In terms of biological role, catalyzes the oxidation of either pyridoxine 5'-phosphate (PNP) or pyridoxamine 5'-phosphate (PMP) into pyridoxal 5'-phosphate (PLP). This chain is Pyridoxine/pyridoxamine 5'-phosphate oxidase, found in Thermosynechococcus vestitus (strain NIES-2133 / IAM M-273 / BP-1).